The sequence spans 73 residues: Conotoxin Im14.3 (73 aa).

The signal sequence occupies residues 1–17; it reads MGVFRCCLAAALVVVCL. The propeptide occupies 18 to 35; it reads SRMGGTEPLESNHEDERR. The tract at residues 22 to 42 is disordered; sequence GTEPLESNHEDERRADDTSGD. Over residues 27–38 the composition is skewed to basic and acidic residues; sequence ESNHEDERRADD. The ShKT domain occupies 44–73; it reads CVDTNEDCVNWASTGQCEANPSYMRENCRK.

In terms of processing, contain 2 disulfide bonds. Expressed by the venom duct.

Its subcellular location is the secreted. In terms of biological role, probable neurotoxin. This chain is Conotoxin Im14.3, found in Conus imperialis (Imperial cone).